We begin with the raw amino-acid sequence, 103 residues long: Nucleoid-associated protein Adeh_3636 (103 aa).

It belongs to the YbaB/EbfC family. In terms of assembly, homodimer.

Its subcellular location is the cytoplasm. It is found in the nucleoid. Binds to DNA and alters its conformation. May be involved in regulation of gene expression, nucleoid organization and DNA protection. In Anaeromyxobacter dehalogenans (strain 2CP-C), this protein is Nucleoid-associated protein Adeh_3636.